A 320-amino-acid chain; its full sequence is tRNA dimethylallyltransferase (320 aa).

Residue 17-24 (GPTAVGKT) participates in ATP binding. 19–24 (TAVGKT) contacts substrate. The interaction with substrate tRNA stretch occupies residues 42–45 (DSMQ).

The protein belongs to the IPP transferase family. As to quaternary structure, monomer. Requires Mg(2+) as cofactor.

It catalyses the reaction adenosine(37) in tRNA + dimethylallyl diphosphate = N(6)-dimethylallyladenosine(37) in tRNA + diphosphate. In terms of biological role, catalyzes the transfer of a dimethylallyl group onto the adenine at position 37 in tRNAs that read codons beginning with uridine, leading to the formation of N6-(dimethylallyl)adenosine (i(6)A). This chain is tRNA dimethylallyltransferase, found in Bacillus thuringiensis (strain Al Hakam).